A 113-amino-acid polypeptide reads, in one-letter code: Protein RALF-like 31 (113 aa).

The N-terminal stretch at 1-21 (MFNSTALVIFAILFLLISADA) is a signal peptide. Residues 22–58 (FPIPSPNGEIDAMLIRNSIIGEDEDLMPTEISRRVLM) constitute a propeptide, removed in mature form. Intrachain disulfides connect Cys-76–Cys-86 and Cys-98–Cys-104.

This sequence belongs to the plant rapid alkalinization factor (RALF) family. Post-translationally, proteolytically cleaved, probably by S1P, a subtilisin-like serine protease (subtilase).

Its subcellular location is the secreted. Functionally, cell signaling peptide that may regulate plant stress, growth, and development. Mediates a rapid alkalinization of extracellular space by mediating a transient increase in the cytoplasmic Ca(2+) concentration leading to a calcium-dependent signaling events through a cell surface receptor and a concomitant activation of some intracellular mitogen-activated protein kinases. This Arabidopsis thaliana (Mouse-ear cress) protein is Protein RALF-like 31 (RALFL31).